A 376-amino-acid chain; its full sequence is Chaperone protein DnaJ (376 aa).

Residues 5–69 (DYYEVLGVSK…QKRAQYDQYG (65 aa)) form the J domain. A CR-type zinc finger spans residues 133–215 (GKDAEIEIPR…CHGKGRVTKT (83 aa)). Zn(2+) is bound by residues C146, C149, C163, C166, C189, C192, C203, and C206. 4 CXXCXGXG motif repeats span residues 146–153 (CDTCHGSG), 163–170 (CSHCGGKG), 189–196 (CQYCNGTG), and 203–210 (CPTCHGKG).

It belongs to the DnaJ family. As to quaternary structure, homodimer. Zn(2+) is required as a cofactor.

Its subcellular location is the cytoplasm. Functionally, participates actively in the response to hyperosmotic and heat shock by preventing the aggregation of stress-denatured proteins and by disaggregating proteins, also in an autonomous, DnaK-independent fashion. Unfolded proteins bind initially to DnaJ; upon interaction with the DnaJ-bound protein, DnaK hydrolyzes its bound ATP, resulting in the formation of a stable complex. GrpE releases ADP from DnaK; ATP binding to DnaK triggers the release of the substrate protein, thus completing the reaction cycle. Several rounds of ATP-dependent interactions between DnaJ, DnaK and GrpE are required for fully efficient folding. Also involved, together with DnaK and GrpE, in the DNA replication of plasmids through activation of initiation proteins. The protein is Chaperone protein DnaJ of Listeria monocytogenes serotype 4b (strain CLIP80459).